Consider the following 311-residue polypeptide: Malate dehydrogenase (311 aa).

NAD(+) contacts are provided by residues G7–G13 and D34. Residues R81 and R87 each coordinate substrate. NAD(+)-binding positions include N94 and I117–N119. N119 and R153 together coordinate substrate. H177 functions as the Proton acceptor in the catalytic mechanism. Position 227 (M227) interacts with NAD(+).

The protein belongs to the LDH/MDH superfamily. MDH type 1 family. Homodimer.

It carries out the reaction (S)-malate + NAD(+) = oxaloacetate + NADH + H(+). Its function is as follows. Catalyzes the reversible oxidation of malate to oxaloacetate. The sequence is that of Malate dehydrogenase from Shewanella loihica (strain ATCC BAA-1088 / PV-4).